A 478-amino-acid chain; its full sequence is Septin-4 (478 aa).

The disordered stretch occupies residues 38-115; that stretch reads VKDFSGNESC…RSPWGKLDPY (78 aa). Low complexity predominate over residues 95 to 108; it reads APAPLSPSARPRSP. Phosphoserine occurs at positions 117 and 118. The Septin-type G domain maps to 141–414; the sequence is KGFDFTLMVA…ENYRAQCIQS (274 aa). Residues 151–158 form a G1 motif region; it reads GESGLGKS. Residues 151-158 and Thr-185 contribute to the GTP site; that span reads GESGLGKS. Residues 208–211 are G3 motif; that stretch reads DTPG. Residues 289-292 form a G4 motif region; the sequence is AKAD. Residue 290–298 coordinates GTP; the sequence is KADTLTPPE. At Ser-325 the chain carries Phosphoserine. The GTP site is built by Gly-348 and Arg-363. Positions 425-448 are disordered; that stretch reads RNKLTRESGTDLPIPAVPPGTDPE. A Phosphoserine modification is found at Ser-432. Thr-434 carries the phosphothreonine modification. Positions 446 to 478 form a coiled coil; that stretch reads DPETEKLIREKDEELRRMQEMLHKIQKQMKETY.

The protein belongs to the TRAFAC class TrmE-Era-EngA-EngB-Septin-like GTPase superfamily. Septin GTPase family. As to quaternary structure, septins polymerize into heterooligomeric protein complexes that form filaments, and can associate with cellular membranes, actin filaments and microtubules. GTPase activity is required for filament formation. Interacts with SEPTIN8. Component of a septin core octameric complex consisting of SEPTIN12, SEPTIN7, SEPTIN6 and SEPTIN2 or SEPTIN4 in the order 12-7-6-2-2-6-7-12 or 12-7-6-4-4-6-7-12. Interacts with SEPTIN14 (via C-terminus). Interacts with DYRK1A. Interacts with SLC6A3/DAT and SNCA/alpha-synuclein. Interacts with STX1A; in the striatum. Interacts with XIAP (via BIR3 domain) following the induction of apoptosis. Interacts with AREL1 (via HECT domain); in the cytoplasm following induction of apoptosis. In terms of processing, ubiquitinated by AREL1. Phosphorylated by DYRK1A.

It is found in the cytoplasm. The protein resides in the cell projection. It localises to the cilium. The protein localises to the flagellum. Its subcellular location is the cytoplasmic vesicle. It is found in the secretory vesicle. The protein resides in the axon. It localises to the dendrite. The protein localises to the perikaryon. Its subcellular location is the synapse. Functionally, filament-forming cytoskeletal GTPase. Pro-apoptotic protein involved in LGR5-positive intestinal stem cell and Paneth cell expansion in the intestines, via its interaction with XIAP. May also play a role in the regulation of cell fate in the intestine. Positive regulator of apoptosis involved in hematopoietic stem cell homeostasis; via its interaction with XIAP. Negative regulator of repair and hair follicle regeneration in response to injury, due to inhibition of hair follicle stem cell proliferation, potentially via its interaction with XIAP. Plays an important role in male fertility and sperm motility. During spermiogenesis, essential for the establishment of the annulus (a fibrous ring structure connecting the midpiece and the principal piece of the sperm flagellum) which is a requisite for the structural and mechanical integrity of the sperm. Involved in the migration of cortical neurons and the formation of neuron leading processes during embryonic development. Required for dopaminergic metabolism in presynaptic autoreceptors; potentially via activity as a presynaptic scaffold protein. This Pongo abelii (Sumatran orangutan) protein is Septin-4.